Here is a 43-residue protein sequence, read N- to C-terminus: Protein PsbN (43 aa).

A helical membrane pass occupies residues 5–27 (TLVTISISCLLVSFTGYAIYTSF).

Belongs to the PsbN family.

It is found in the plastid. The protein localises to the chloroplast thylakoid membrane. Its function is as follows. May play a role in photosystem I and II biogenesis. The protein is Protein PsbN of Welwitschia mirabilis (Tree tumbo).